We begin with the raw amino-acid sequence, 393 residues long: MEGRLVSKKEIVAMILAGGQGSRLGVLTKNLAKPAVPFGGKYRIIDFPLSNCSNSGIYTVGVLTQYKPLKLNEHIGIGDTWDLDRRDGGVSILPPYQKEKGGDWYKGTANAIYQNIEFIERYDPEYVLILSGDHIYKMDYDKMLEMHKQKEADATIAVINVPMHEASRFGIMNTNEDLSIYEFEEKPEHPKSTNASMGIYIFNWKILKKFLEEDELDQSSSNDFGKNIIPKMLNSGKKLIAYPFNGYWKDVGTIESLWEANMDLLKYEDELSLYDSEWKIYSANPVRPAQFIGKDAEIKSSLTVEGCIVHGKVENSVLFQGVYVGKGAIVKDAVIMPNTKIEDNVLIEKAIIGSEAIVCKGCKIGDGNKISVIASKEVVIGSKEVIEECAMVK.

Alpha-D-glucose 1-phosphate contacts are provided by residues Tyr105, Gly170, 185–186 (EK), and Ser196.

The protein belongs to the bacterial/plant glucose-1-phosphate adenylyltransferase family. In terms of assembly, homotetramer.

It carries out the reaction alpha-D-glucose 1-phosphate + ATP + H(+) = ADP-alpha-D-glucose + diphosphate. It functions in the pathway glycan biosynthesis; glycogen biosynthesis. Involved in the biosynthesis of ADP-glucose, a building block required for the elongation reactions to produce glycogen. Catalyzes the reaction between ATP and alpha-D-glucose 1-phosphate (G1P) to produce pyrophosphate and ADP-Glc. This Clostridium perfringens (strain 13 / Type A) protein is Glucose-1-phosphate adenylyltransferase.